Consider the following 451-residue polypeptide: MRLSRYFLPVLKETPSEAQVVSHRYMLRAGMIKQSAAGIYSWLPLGYRVLKKIEGIVHEEQMRAGHIPMLMPTIQSADLWRESGRYDAYGEEMLRIRDRHDRDMLFTPTAEELITDIFRANVSSYKDLPLTMYQIQWKFRDEIRPRFGVMRGREFYMKDGYNFDLTKEDALHAYNRHLVTYLRTYERMGLQAIPMRADGGPIGGDYTHEFLVLAETGESEVFYDSEITDLTFGAREIDYDNVEQCQAVLEEFTSRYARTDETHDEALFNAVPEERRRVARGIEVGQIFYFGTKYSEALGATVQTADGQSVPVHMGSHGIGVSRLLGAIIEASHDDKGIIWPEGVTPFHCGIVNLKQGDDEADAACEQLYAALTAIGLEPLYDDRKERAGGKFASMDLIGLPWRITVGPRGLKNGVVEVTSRRTGESEEMSPEDAVKKIAAIYANHPTPRGF.

Belongs to the class-II aminoacyl-tRNA synthetase family. ProS type 2 subfamily. Homodimer.

Its subcellular location is the cytoplasm. It catalyses the reaction tRNA(Pro) + L-proline + ATP = L-prolyl-tRNA(Pro) + AMP + diphosphate. Catalyzes the attachment of proline to tRNA(Pro) in a two-step reaction: proline is first activated by ATP to form Pro-AMP and then transferred to the acceptor end of tRNA(Pro). This chain is Proline--tRNA ligase, found in Ruegeria sp. (strain TM1040) (Silicibacter sp.).